The sequence spans 207 residues: Transcription factor bHLH149 (207 aa).

The interval 1 to 25 is disordered; that stretch reads MVESLFPSIENTGESSRRKKPRISE. One can recognise a bHLH domain in the interval 132–181; the sequence is KSRKGLTETNRIKLPAVERKLKILGRLVPGCRKVSVPNLLDEATDYIAAL.

In terms of assembly, homodimer. Interacts with PRE3.

The protein resides in the nucleus. Functionally, atypical bHLH transcription factor probably unable to bind DNA. Negatively regulates brassinosteroid signaling. This Arabidopsis thaliana (Mouse-ear cress) protein is Transcription factor bHLH149 (BHLH149).